A 427-amino-acid polypeptide reads, in one-letter code: Dihydroorotase (427 aa).

Residues histidine 60 and histidine 62 each coordinate Zn(2+). Residues 62-64 (HLR) and asparagine 94 each bind substrate. Zn(2+) is bound by residues aspartate 152, histidine 179, and histidine 232. Substrate is bound at residue asparagine 278. Zn(2+) is bound at residue aspartate 305. Aspartate 305 is a catalytic residue. Substrate contacts are provided by residues histidine 309 and 323–324 (FG).

It belongs to the metallo-dependent hydrolases superfamily. DHOase family. Class I DHOase subfamily. Zn(2+) is required as a cofactor.

It catalyses the reaction (S)-dihydroorotate + H2O = N-carbamoyl-L-aspartate + H(+). The protein operates within pyrimidine metabolism; UMP biosynthesis via de novo pathway; (S)-dihydroorotate from bicarbonate: step 3/3. In terms of biological role, catalyzes the reversible cyclization of carbamoyl aspartate to dihydroorotate. The sequence is that of Dihydroorotase from Bacillus caldolyticus.